A 286-amino-acid polypeptide reads, in one-letter code: Putative WUSCHEL-related homeobox 2 (286 aa).

The tract at residues methionine 1–threonine 25 is disordered. The homeobox; WUS-type DNA-binding region spans glycine 23–leucine 87.

Belongs to the WUS homeobox family.

The protein resides in the nucleus. Functionally, transcription factor which may be involved in developmental processes. This chain is Putative WUSCHEL-related homeobox 2 (WOX2), found in Oryza sativa subsp. japonica (Rice).